A 164-amino-acid chain; its full sequence is Putative 4-hydroxy-4-methyl-2-oxoglutarate aldolase (164 aa).

Residues 80–83 and R102 contribute to the substrate site; that span reads GGNL. D103 is an a divalent metal cation binding site.

Belongs to the class II aldolase/RraA-like family. Homotrimer. It depends on a divalent metal cation as a cofactor.

The enzyme catalyses 4-hydroxy-4-methyl-2-oxoglutarate = 2 pyruvate. It catalyses the reaction oxaloacetate + H(+) = pyruvate + CO2. Its function is as follows. Catalyzes the aldol cleavage of 4-hydroxy-4-methyl-2-oxoglutarate (HMG) into 2 molecules of pyruvate. Also contains a secondary oxaloacetate (OAA) decarboxylase activity due to the common pyruvate enolate transition state formed following C-C bond cleavage in the retro-aldol and decarboxylation reactions. The chain is Putative 4-hydroxy-4-methyl-2-oxoglutarate aldolase from Paraburkholderia phymatum (strain DSM 17167 / CIP 108236 / LMG 21445 / STM815) (Burkholderia phymatum).